Here is a 365-residue protein sequence, read N- to C-terminus: TD and POZ domain-containing protein 3 (365 aa).

In terms of domain architecture, MATH spans 19–149; sequence KFCYNWTISN…EDQFTICCKV (131 aa). One can recognise a BTB domain in the interval 188-250; it reads TDCCLLVAGH…EMMGFIYTGK (63 aa).

The protein belongs to the Tdpoz family.

This is TD and POZ domain-containing protein 3 from Mus musculus (Mouse).